We begin with the raw amino-acid sequence, 1273 residues long: Clustered mitochondria protein homolog (1273 aa).

One can recognise a Clu domain in the interval 344-599; it reads PANNADYSRM…NTYPLDVKFA (256 aa). 3 TPR repeats span residues 981 to 1013, 1022 to 1055, and 1151 to 1184; these read SDQK…KEEV, AEKY…YERV, and ATLE…FTRE. Disordered regions lie at residues 1217–1242 and 1254–1273; these read AEQA…KAEL and IEGG…KGKK. The span at 1262–1273 shows a compositional bias: basic residues; sequence SKKKSSKKKGKK.

It belongs to the CLU family. May associate with the eukaryotic translation initiation factor 3 (eIF-3) complex.

It is found in the cytoplasm. MRNA-binding protein involved in proper cytoplasmic distribution of mitochondria. The chain is Clustered mitochondria protein homolog from Vanderwaltozyma polyspora (strain ATCC 22028 / DSM 70294 / BCRC 21397 / CBS 2163 / NBRC 10782 / NRRL Y-8283 / UCD 57-17) (Kluyveromyces polysporus).